A 166-amino-acid chain; its full sequence is NADH-quinone oxidoreductase subunit A (166 aa).

A run of 3 helical transmembrane segments spans residues 16 to 36, 68 to 88, and 98 to 118; these read FAVF…GAYF, FYLV…LYAW, and IGFI…FYLV. The segment at 141–166 is disordered; that stretch reads RYASSHPQDISQELSVAGSQQANESR.

The protein belongs to the complex I subunit 3 family. NDH-1 is composed of 13 different subunits. Subunits NuoA, H, J, K, L, M, N constitute the membrane sector of the complex.

The protein localises to the cell inner membrane. The enzyme catalyses a quinone + NADH + 5 H(+)(in) = a quinol + NAD(+) + 4 H(+)(out). Functionally, NDH-1 shuttles electrons from NADH, via FMN and iron-sulfur (Fe-S) centers, to quinones in the respiratory chain. The immediate electron acceptor for the enzyme in this species is believed to be ubiquinone. Couples the redox reaction to proton translocation (for every two electrons transferred, four hydrogen ions are translocated across the cytoplasmic membrane), and thus conserves the redox energy in a proton gradient. This Yersinia pseudotuberculosis serotype O:1b (strain IP 31758) protein is NADH-quinone oxidoreductase subunit A.